Consider the following 955-residue polypeptide: Aminopeptidase A (955 aa).

Over 1–17 the chain is Cytoplasmic; it reads MDIEDKSSKMHCMKGKH. Residues 18–38 form a helical; Signal-anchor for type II membrane protein membrane-spanning segment; that stretch reads VAIICGVVIAVGLILGLGLGL. Residues 39–955 lie on the Extracellular side of the membrane; sequence GLKPEACNPP…LENSEQPNFV (917 aa). The disordered stretch occupies residues 49-69; the sequence is EDNGLLSTKPPTTSTPNVTNP. Residues 55 to 69 show a composition bias toward low complexity; it reads STKPPTTSTPNVTNP. 3 N-linked (GlcNAc...) asparagine glycosylation sites follow: Asn65, Asn118, and Asn192. Glu218 is a substrate binding site. Asn312, Asn319, and Asn335 each carry an N-linked (GlcNAc...) asparagine glycan. A substrate-binding site is contributed by 352–356; that stretch reads GAMEN. His388 provides a ligand contact to Zn(2+). The active-site Proton acceptor is Glu389. Zn(2+) contacts are provided by His392 and Glu411. N-linked (GlcNAc...) asparagine glycans are attached at residues Asn458, Asn547, Asn584, Asn592, Asn647, Asn674, Asn681, Asn759, Asn766, Asn823, and Asn836. Residue Arg882 coordinates substrate.

The protein belongs to the peptidase M1 family. In terms of assembly, homodimer; disulfide-linked. Requires Zn(2+) as cofactor.

It is found in the cell membrane. It catalyses the reaction Release of N-terminal glutamate (and to a lesser extent aspartate) from a peptide.. Its activity is regulated as follows. The partially purified protein is inhibited by the aminopeptidase competitive inhibitors amastatin (Leu and acidic inhibitor), and bestatin (Leu inhibitor), by chelating agents EDTA, and 1,10-Phenanthroline, as well as by Zn(2+) ions. Substrate specificity is modulated by Ca(2+), Ba(2+), and Mn(2+) ions which enhances the enzymatic activity for cleavage of acidic residues. Venom protein that cleaves N-terminal acidic residues from peptides with high potency in presence of calcium. It may have several roles in venom including alteration of blood pressure by cleaving circulating angiotensin-2, general degradation of host tissue, increase of permeability to other venom components, and/or processing of other toxins in the venom. The polypeptide is Aminopeptidase A (Gloydius brevicauda (Korean slamosa snake)).